A 147-amino-acid polypeptide reads, in one-letter code: Nucleoside diphosphate kinase (147 aa).

ATP is bound by residues K9, F57, R85, T91, R102, and N112. Catalysis depends on H115, which acts as the Pros-phosphohistidine intermediate.

It belongs to the NDK family. Homotetramer. Mg(2+) serves as cofactor.

The protein localises to the cytoplasm. The catalysed reaction is a 2'-deoxyribonucleoside 5'-diphosphate + ATP = a 2'-deoxyribonucleoside 5'-triphosphate + ADP. It catalyses the reaction a ribonucleoside 5'-diphosphate + ATP = a ribonucleoside 5'-triphosphate + ADP. Functionally, major role in the synthesis of nucleoside triphosphates other than ATP. The ATP gamma phosphate is transferred to the NDP beta phosphate via a ping-pong mechanism, using a phosphorylated active-site intermediate. In Listeria monocytogenes serotype 4b (strain CLIP80459), this protein is Nucleoside diphosphate kinase.